A 101-amino-acid polypeptide reads, in one-letter code: Osteocalcin (101 aa).

Residues Met-1–Gly-19 form the signal peptide. Positions Ser-20–Arg-52 are excised as a propeptide. The region spanning Ser-53 to Gly-99 is the Gla domain. Positions 69, 73, 76, and 82 each coordinate Ca(2+). 4-carboxyglutamate is present on residues Glu-69, Glu-73, and Glu-76. Cys-75 and Cys-81 are disulfide-bonded.

The protein belongs to the osteocalcin/matrix Gla protein family. In terms of processing, gamma-carboxyglutamate residues are formed by vitamin K dependent carboxylation by GGCX. These residues are essential for the binding of calcium.

The protein resides in the secreted. Functionally, the carboxylated form is one of the main organic components of the bone matrix, which constitutes 1-2% of the total bone protein. The carboxylated form binds strongly to apatite and calcium. This chain is Osteocalcin (bglap), found in Xenopus laevis (African clawed frog).